A 361-amino-acid polypeptide reads, in one-letter code: uncharacterized protein (361 aa).

This is an uncharacterized protein from Schizosaccharomyces pombe (strain 972 / ATCC 24843) (Fission yeast).